Here is a 372-residue protein sequence, read N- to C-terminus: PqqA peptide cyclase (372 aa).

A Radical SAM core domain is found at 4–220; sequence APPPLSVLLE…ETARRQLGDR (217 aa). [4Fe-4S] cluster-binding residues include C18, C22, and C25.

It belongs to the radical SAM superfamily. PqqE family. As to quaternary structure, interacts with PqqD. The interaction is necessary for activity of PqqE. The cofactor is [4Fe-4S] cluster.

It catalyses the reaction [PQQ precursor protein] + S-adenosyl-L-methionine = E-Y cross-linked-[PQQ precursor protein] + 5'-deoxyadenosine + L-methionine + H(+). The protein operates within cofactor biosynthesis; pyrroloquinoline quinone biosynthesis. Its function is as follows. Catalyzes the cross-linking of a glutamate residue and a tyrosine residue in the PqqA protein as part of the biosynthesis of pyrroloquinoline quinone (PQQ). The sequence is that of PqqA peptide cyclase from Xanthomonas axonopodis pv. citri (strain 306).